A 310-amino-acid polypeptide reads, in one-letter code: Protease HtpX homolog (310 aa).

2 helical membrane passes run 7 to 27 (SVMLLTAMTAFLLIVGQLIGG) and 29 to 49 (AGMTFALIMAVGMNFFSYWYS). His131 lines the Zn(2+) pocket. The active site involves Glu132. Zn(2+) is bound at residue His135. 2 helical membrane-spanning segments follow: residues 141 to 161 (ILIGTIAATMAGAVMFLASMA) and 178 to 198 (PLGFAGMLIMAILAPIGAALI). Glu207 contacts Zn(2+). Positions 277 to 310 (LTGARPQSGGAPSGPERTARNAEDSAKDFWDSLK) are disordered. Over residues 293 to 310 (RTARNAEDSAKDFWDSLK) the composition is skewed to basic and acidic residues.

The protein belongs to the peptidase M48B family. The cofactor is Zn(2+).

Its subcellular location is the cell inner membrane. This Desulfatibacillum aliphaticivorans protein is Protease HtpX homolog.